The following is an 842-amino-acid chain: Protein P (842 aa).

A terminal protein domain (TP) region spans residues 1-177 (MPLSYQHFRR…FCGSPYSWEQ (177 aa)). The spacer stretch occupies residues 178–345 (ELHHGAFLDG…YCLTHLVNLL (168 aa)). The tract at residues 205 to 271 (SRPPVGSSIQ…RHAKNIASRP (67 aa)) is disordered. Residues 223–239 (GPQSQQRPLDGSQQGRS) are compositionally biased toward polar residues. Residues 346–689 (EDWGPCTEHG…YLNLYPVARQ (344 aa)) are polymerase/reverse transcriptase domain (RT). In terms of domain architecture, Reverse transcriptase spans 356–599 (KHHIRIPRTP…YSLNFMGYVI (244 aa)). The Mg(2+) site is built by Asp428, Asp550, and Asp551.

Belongs to the hepadnaviridae P protein family.

The catalysed reaction is DNA(n) + a 2'-deoxyribonucleoside 5'-triphosphate = DNA(n+1) + diphosphate. It catalyses the reaction Endonucleolytic cleavage to 5'-phosphomonoester.. Activated by host HSP70 and HSP40 in vitro to be able to bind the epsilon loop of the pgRNA. Because deletion of the RNase H region renders the protein partly chaperone-independent, the chaperones may be needed indirectly to relieve occlusion of the RNA-binding site by this domain. Inhibited by several reverse-transcriptase inhibitors: Lamivudine, Adefovir and Entecavir. In terms of biological role, multifunctional enzyme that converts the viral RNA genome into dsDNA in viral cytoplasmic capsids. This enzyme displays a DNA polymerase activity that can copy either DNA or RNA templates, and a ribonuclease H (RNase H) activity that cleaves the RNA strand of RNA-DNA heteroduplexes in a partially processive 3'- to 5'-endonucleasic mode. Neo-synthesized pregenomic RNA (pgRNA) are encapsidated together with the P protein, and reverse-transcribed inside the nucleocapsid. Initiation of reverse-transcription occurs first by binding the epsilon loop on the pgRNA genome, and is initiated by protein priming, thereby the 5'-end of (-)DNA is covalently linked to P protein. Partial (+)DNA is synthesized from the (-)DNA template and generates the relaxed circular DNA (RC-DNA) genome. After budding and infection, the RC-DNA migrates in the nucleus, and is converted into a plasmid-like covalently closed circular DNA (cccDNA). The activity of P protein does not seem to be necessary for cccDNA generation, and is presumably released from (+)DNA by host nuclear DNA repair machinery. This Hepatitis B virus genotype E subtype ayw4 (isolate Kou) (HBV-E) protein is Protein P.